A 159-amino-acid polypeptide reads, in one-letter code: 2-C-methyl-D-erythritol 2,4-cyclodiphosphate synthase (159 aa).

2 residues coordinate a divalent metal cation: Asp10 and His12. 4-CDP-2-C-methyl-D-erythritol 2-phosphate-binding positions include 10–12 (DVH) and 36–37 (HS). A divalent metal cation is bound at residue His44. 4-CDP-2-C-methyl-D-erythritol 2-phosphate is bound by residues 58–60 (DIG) and Arg144.

Belongs to the IspF family. Homotrimer. The cofactor is a divalent metal cation.

It carries out the reaction 4-CDP-2-C-methyl-D-erythritol 2-phosphate = 2-C-methyl-D-erythritol 2,4-cyclic diphosphate + CMP. Its pathway is isoprenoid biosynthesis; isopentenyl diphosphate biosynthesis via DXP pathway; isopentenyl diphosphate from 1-deoxy-D-xylulose 5-phosphate: step 4/6. Involved in the biosynthesis of isopentenyl diphosphate (IPP) and dimethylallyl diphosphate (DMAPP), two major building blocks of isoprenoid compounds. Catalyzes the conversion of 4-diphosphocytidyl-2-C-methyl-D-erythritol 2-phosphate (CDP-ME2P) to 2-C-methyl-D-erythritol 2,4-cyclodiphosphate (ME-CPP) with a corresponding release of cytidine 5-monophosphate (CMP). This chain is 2-C-methyl-D-erythritol 2,4-cyclodiphosphate synthase, found in Paraburkholderia phymatum (strain DSM 17167 / CIP 108236 / LMG 21445 / STM815) (Burkholderia phymatum).